The chain runs to 699 residues: (E2-independent) E3 ubiquitin-conjugating enzyme FATS (699 aa).

The tract at residues 48-116 is required for interaction with p53/TP53; that stretch reads MISSIVISQM…LGIPAPSDER (69 aa). Disordered regions lie at residues 107-134, 443-473, and 528-569; these read LGIP…GGPR, KPTR…ERRH, and KSED…PARS. 2 stretches are compositionally biased toward basic and acidic residues: residues 113–129 and 460–473; these read SDER…EERP and CLSR…ERRH. The required for interaction with HDAC1 stretch occupies residues 116–224; sequence RGPEAELPPK…GLCERRKYWV (109 aa). Residues 534–545 are compositionally biased toward pro residues; the sequence is TPEPSPAAPSPA. The tract at residues 571 to 699 is ALMS motif; that stretch reads TLQEALEVRK…LDQLLQRNAV (129 aa).

In terms of assembly, interacts with HDAC1; the interaction prevents binding of HDAC1 to CDKN1A/p21 and facilitates the acetylation and stabilization of CDKN1A/p21. Interacts with p53/TP53; the interaction inhibits binding of p53/TP53 and MDM2.

Its subcellular location is the cytoplasm. The protein localises to the cytoskeleton. It is found in the microtubule organizing center. It localises to the centrosome. Its function is as follows. Tumor suppressor that is required to sustain G2/M checkpoint after DNA damage. Acts as a p53/TP53 activator by inhibiting MDM2 binding to p53/TP53 and stimulating non-proteolytic polyubiquitination of p53/TP53. Exhibits ubiquitin ligase (E3) activity and assemble ubiquitin polymers through 'Lys-11'- (K11-), 'Lys-29'- (K29-) and 'Lys-63'- (K63)-linkages, independently of the ubiquitin-conjugating enzyme (E2). Promotes p53/TP53-dependent transcription of CDKN1A/p21, leading to robust checkpoint response. Mediates CDKN1A/p21 protein stability in a ubiquitin-independent manner. Interacts with HDAC1 and prevents binding of HDAC1 to CDKN1A/p21 and facilitates the acetylation and stabilization of CDKN1A/p21. May have a role in the assembly of primary cilia. In Homo sapiens (Human), this protein is (E2-independent) E3 ubiquitin-conjugating enzyme FATS.